We begin with the raw amino-acid sequence, 42 residues long: Mating-type M-specific polypeptide Mi (42 aa).

The protein resides in the cytoplasm. It localises to the nucleus. Functionally, mating type proteins are sequence specific DNA-binding proteins that act as master switches in yeast differentiation by controlling gene expression in a cell type-specific fashion. Required for meiosis, but plays no role in conjugation. The chain is Mating-type M-specific polypeptide Mi (mat1-Mi) from Schizosaccharomyces pombe (strain 972 / ATCC 24843) (Fission yeast).